A 205-amino-acid polypeptide reads, in one-letter code: Anaerobic dimethyl sulfoxide reductase chain B (205 aa).

3 4Fe-4S ferredoxin-type domains span residues 4-32, 57-89, and 90-119; these read YGFYFDSERCTGCKTCELACKDYKDLGTE, NIFAYYMSISCNHCADPACTKVCPTGAMHKNAD, and GFVIVNEEICIGCRYCHMACPYDAPQYDAQ. Residues cysteine 13, cysteine 16, cysteine 19, cysteine 23, cysteine 67, cysteine 70, cysteine 75, cysteine 79, cysteine 99, cysteine 102, cysteine 105, cysteine 109, cysteine 126, cysteine 129, cysteine 141, and cysteine 145 each contribute to the [4Fe-4S] cluster site.

As to quaternary structure, heterotrimeric enzyme composed of a catalytic heterodimer (DmsAB) and a membrane anchor protein (DmsC). Requires [4Fe-4S] cluster as cofactor.

In terms of biological role, electron transfer subunit of the terminal reductase during anaerobic growth on various sulfoxide and N-oxide compounds. The sequence is that of Anaerobic dimethyl sulfoxide reductase chain B (dmsB) from Haemophilus influenzae (strain ATCC 51907 / DSM 11121 / KW20 / Rd).